Reading from the N-terminus, the 341-residue chain is UDP-3-O-acylglucosamine N-acyltransferase (341 aa).

The active-site Proton acceptor is the H255.

Belongs to the transferase hexapeptide repeat family. LpxD subfamily. In terms of assembly, homotrimer.

The catalysed reaction is a UDP-3-O-[(3R)-3-hydroxyacyl]-alpha-D-glucosamine + a (3R)-hydroxyacyl-[ACP] = a UDP-2-N,3-O-bis[(3R)-3-hydroxyacyl]-alpha-D-glucosamine + holo-[ACP] + H(+). It participates in bacterial outer membrane biogenesis; LPS lipid A biosynthesis. Catalyzes the N-acylation of UDP-3-O-acylglucosamine using 3-hydroxyacyl-ACP as the acyl donor. Is involved in the biosynthesis of lipid A, a phosphorylated glycolipid that anchors the lipopolysaccharide to the outer membrane of the cell. This chain is UDP-3-O-acylglucosamine N-acyltransferase, found in Granulibacter bethesdensis (strain ATCC BAA-1260 / CGDNIH1).